Reading from the N-terminus, the 329-residue chain is MENTIEALTGRIINGEAITHAEALELSQMEGSALFPLFCVANRIKEHFVGDKVYLCSIINAKSGRCPENCSFCAQSAHHKTDAPVYSLVDEDKMVACAHEAEKNGSSCYGIITSGTSINKGEELTRICRAVKRIRQETGITPSCSLGIIDYETALALKDAGVETYHHNLETARSFFPNVCTTHDYEEDVETVRVARKAGMKVCCGGIFGLGESIPQRVEMALTLRELDVDSVPLNFLNPIPGTRLENAVNITPMECLQTIALFRMILPSKKISVCGGREKNLRDLQSWIFFAGASGTMIGNYLTTTGRAAEEDWQMLKDLNLSAANCCD.

The Radical SAM core domain maps to 48–278; the sequence is FVGDKVYLCS…SKKISVCGGR (231 aa). 3 residues coordinate [4Fe-4S] cluster: C66, C70, and C73. [2Fe-2S] cluster-binding residues include S143 and C203.

The protein belongs to the radical SAM superfamily. Biotin synthase family. Homodimer. [4Fe-4S] cluster serves as cofactor. [2Fe-2S] cluster is required as a cofactor.

The enzyme catalyses (4R,5S)-dethiobiotin + (sulfur carrier)-SH + 2 reduced [2Fe-2S]-[ferredoxin] + 2 S-adenosyl-L-methionine = (sulfur carrier)-H + biotin + 2 5'-deoxyadenosine + 2 L-methionine + 2 oxidized [2Fe-2S]-[ferredoxin]. The protein operates within cofactor biosynthesis; biotin biosynthesis; biotin from 7,8-diaminononanoate: step 2/2. Its function is as follows. Catalyzes the conversion of dethiobiotin (DTB) to biotin by the insertion of a sulfur atom into dethiobiotin via a radical-based mechanism. The chain is Biotin synthase from Geotalea uraniireducens (strain Rf4) (Geobacter uraniireducens).